Reading from the N-terminus, the 234-residue chain is Ribonuclease HII (234 aa).

In terms of domain architecture, RNase H type-2 spans 47 to 234; the sequence is IRIAGVDEVG…KTVHKILYQE (188 aa). A divalent metal cation is bound by residues Asp53, Glu54, and Asp144.

It belongs to the RNase HII family. The cofactor is Mn(2+). Requires Mg(2+) as cofactor.

Its subcellular location is the cytoplasm. It carries out the reaction Endonucleolytic cleavage to 5'-phosphomonoester.. In terms of biological role, endonuclease that specifically degrades the RNA of RNA-DNA hybrids. The protein is Ribonuclease HII of Ruegeria pomeroyi (strain ATCC 700808 / DSM 15171 / DSS-3) (Silicibacter pomeroyi).